The following is a 660-amino-acid chain: RalBP1-associated Eps domain-containing protein 2 (660 aa).

One can recognise an EH 1 domain in the interval 34–147 (EQQCYSELFA…RFMMSKNDGE (114 aa)). Positions 169–208 (EKNSFKRMDDEDKQQETQSPTMSPLASPPSSPPHYQRVPL) are disordered. Ser-254 bears the Phosphoserine mark. One can recognise an EH 2 domain in the interval 282 to 373 (QREYYVNQFR…LQPEYLQAAF (92 aa)). The 36-residue stretch at 315–350 (LSIPELSYIWELSDADCDGALTLPEFCAAFHLIVAR) folds into the EF-hand domain. 4 residues coordinate Ca(2+): Asp-328, Asp-330, Asp-332, and Glu-339. The tract at residues 433–616 (NEALPKDVSE…KQKKAIQTAI (184 aa)) is disordered. A Phosphothreonine modification is found at Thr-479. Ser-493 bears the Phosphoserine mark. Over residues 512–523 (LPPPPALPPRPC) the composition is skewed to pro residues. Residues 514–660 (PPPALPPRPC…LEQLRPVTVL (147 aa)) form an interaction with RALBP1 region. Positions 561–660 (PPSKPIRRKF…LEQLRPVTVL (100 aa)) are interaction with ASAP1. Low complexity predominate over residues 582–594 (PSTAASGPASAAT). Residues 601–657 (VQKQSSKQKKAIQTAIRKNKEANAVLARLNSELQQQLKEVHQERIALENQLEQLRPV) adopt a coiled-coil conformation.

Interacts with EPN1; the interaction is direct. Interacts with EPS15; the interaction is direct. Interacts with EPS15L1. Interacts with RALBP1; can form a ternary complex with activated Ral (RALA or RALB). Interacts with ASAP1; the interaction is direct and this complex can bind paxillin. Also forms a ternary complex with RALBP1 and ASAP1. Interacts with GRB2. In terms of processing, tyrosine-phosphorylated upon stimulation of cells with EGF. Phosphorylation on Tyr-residues induces its association with the EGF receptor probably indirectly through an adapter like GRB2. Expressed at high levels in the cerebrum, cerebellum, lung, kidney, and testis. Weakly expressed in the kidney. Isoform 2 is down-regulated during progression of prostate cancer.

It localises to the cytoplasm. Involved in ligand-dependent receptor mediated endocytosis of the EGF and insulin receptors as part of the Ral signaling pathway. By controlling growth factor receptors endocytosis may regulate cell survival. Through ASAP1 may regulate cell adhesion and migration. This Homo sapiens (Human) protein is RalBP1-associated Eps domain-containing protein 2 (REPS2).